The sequence spans 30 residues: Kalata-B17 (30 aa).

A cross-link (cyclopeptide (Gly-Asn)) is located at residues 1–30 (GIPCAESCVYIPCTITALLGCKCKDQVCYN). Cystine bridges form between C4-C21, C8-C23, and C13-C28.

In terms of processing, this is a cyclic peptide.

Probably participates in a plant defense mechanism. The sequence is that of Kalata-B17 from Oldenlandia affinis.